We begin with the raw amino-acid sequence, 400 residues long: MTWICVITLFALASATLGNKVSRVGVLFPKTRNDNECTARGGLKGSCKSLIDCPSVLATLKDSFPVVCSWNGRFQPIVCCPDAIAPPPVTTTAVTVISTKEPKLPRLHISGCGKRKVKIDITTVGRSGSPILPPISTPQNSTGGRGIIAGGVEAKIGAWPWMAAVFVKNFGIGRFHCAGSIISNKYILSAAHAFLIGGRKLTPTRLAVRVGGHYIKRGQEYPVKDVIIHPHYVEKENYNDIAIIELKEELNFTDLVNPICLPDPETVTDPLKDRIVTAAGWGDLDFSGPRSQVLREVSIPVVPVDKCDQAYEKLNTPSLKNGITNNFLCAGLEEGGKDACQGDSGGPLMLVNNTRWIVVGVVSFGHKCAEEGYPGVYSRVASYLDWIAKVTNSLDHAVTN.

The signal sequence occupies residues 1–23; the sequence is MTWICVITLFALASATLGNKVSR. Residues 36–80 form the Clip domain; that stretch reads ECTARGGLKGSCKSLIDCPSVLATLKDSFPVVCSWNGRFQPIVCC. 3 disulfides stabilise this stretch: Cys37/Cys79, Cys47/Cys68, and Cys53/Cys80. Positions 104–124 are cleaved as a propeptide — activation peptide; that stretch reads LPRLHISGCGKRKVKIDITTV. Asn140 carries an N-linked (GlcNAc...) asparagine glycan. The Peptidase S1 domain maps to 148–392; that stretch reads IAGGVEAKIG…YLDWIAKVTN (245 aa). Active-site charge relay system residues include His192 and Asp240. Residue Asn251 is glycosylated (N-linked (GlcNAc...) asparagine). 2 disulfide bridges follow: Cys307/Cys329 and Cys340/Cys368. Ser344 functions as the Charge relay system in the catalytic mechanism. Residue Asn352 is glycosylated (N-linked (GlcNAc...) asparagine).

This sequence belongs to the peptidase S1 family. CLIP subfamily. Upon activation by factor C, it is converted to a two-chain active form composed of a light and a heavy chain linked by a disulfide bond.

The protein localises to the secreted. It catalyses the reaction Selective cleavage of 98-Arg-|-Ile-99 bond in Limulus proclotting enzyme to form active clotting enzyme.. Strongly inhibited by alpha2-plasmin inhibitor and DFP. Partially inhibited by benzamidine, leupeptin and PCMB. This enzyme is closely associated with an endotoxin-sensitive hemolymph coagulation system which may play important roles in both hemostasis and host defense mechanisms. Its active form catalyzes the activation of proclotting enzyme. Does not activate the mammalian coagulation factors factor IX, factor X, prothrombin, plasminogen, protein C or prekallikrein. Does not hydrolyze fibrinogen. Does not catalyze the activation of factor C or coagulogen. In Tachypleus tridentatus (Japanese horseshoe crab), this protein is Clotting factor B.